A 1447-amino-acid chain; its full sequence is Calcium-dependent secretion activator (1447 aa).

Positions 1-15 (MIDPSSSEEEGEDDA) are enriched in acidic residues. Disordered regions lie at residues 1-35 (MIDP…TSAV) and 101-163 (DTGN…EEEE). 2 stretches are compositionally biased toward polar residues: residues 18–32 (NVSS…TKGT) and 111–126 (GIPS…QSVG). The span at 127–144 (SSRANSLPRPLSPSPSLT) shows a compositional bias: low complexity. Positions 145-163 (SEKHETAEPHGKHEREEEE) are enriched in basic and acidic residues. Residues 417–547 (SKYGLQKLKR…PLSSKSPEWH (131 aa)) enclose the C2 domain. Residues 573 to 683 (NMKHCGYLYA…WVMAMYRATG (111 aa)) enclose the PH domain. One can recognise an MHD1 domain in the interval 970–1157 (VDMDRVLSEQ…DMIEQCIQRT (188 aa)). Over residues 1386–1395 (REGEEEDNGD) the composition is skewed to acidic residues. Residues 1386 to 1406 (REGEEEDNGDESTSNIPRGLP) form a disordered region.

As to expression, restricted to the nervous system at all stages of development and highly localized at synapses (at protein level).

It is found in the cytoplasmic vesicle membrane. Its subcellular location is the synapse. Its function is as follows. Calcium-binding protein involved in exocytosis of vesicles filled with neurotransmitters and neuropeptides. May specifically mediate the Ca(2+)-dependent exocytosis of large dense-core vesicles (DCVs) and other dense-core vesicles. However, it probably also participates in small clear synaptic vesicles (SVs) exocytosis and it is unclear whether its function is related to Ca(2+) triggering. In Drosophila melanogaster (Fruit fly), this protein is Calcium-dependent secretion activator.